We begin with the raw amino-acid sequence, 207 residues long: Varv peptide A/Kalata-B1 (207 aa).

The first 20 residues, 1–20 (MKMFIVLVLSAAFALPAAFA), serve as a signal peptide directing secretion. Residues 21–66 (TEQDVITLQAYEELLKNGAANGMTKTVISSPVLEEALVSYSKNKLG) constitute a propeptide that is removed on maturation. A cross-link (cyclopeptide (Gly-Asn)) is located at residues 67–95 (GLPVCGETCVGGTCNTPGCSCSWPVCTRN). 3 cysteine pairs are disulfide-bonded: Cys71-Cys85, Cys75-Cys87, and Cys80-Cys92. A propeptide spanning residues 96 to 120 (SLESTKSANPLLEEALTAFAKKGLG) is cleaved from the precursor. A cross-link (cyclopeptide (Gly-Asn)) is located at residues 121-149 (GLPVCGETCVGGTCNTPGCTCSWPVCTRN). Cystine bridges form between Cys125/Cys139, Cys129/Cys141, and Cys134/Cys146. Positions 150-174 (ALETQKPNHLLEEALVAFAKKGNLG) are excised as a propeptide. The cyclopeptide (Gly-Asn) cross-link spans 175-203 (GLPVCGETCVGGTCNTPGCSCSWPVCTRN). Cystine bridges form between Cys179-Cys193, Cys183-Cys195, and Cys188-Cys200. The propeptide occupies 204-207 (ALAM).

The protein belongs to the cyclotide family. Moebius subfamily. In terms of processing, varv peptide A and kalata-B1 are cyclic peptides.

Probably participates in a plant defense mechanism. Has hemolytic activity. This chain is Varv peptide A/Kalata-B1, found in Viola odorata (Sweet violet).